The following is a 495-amino-acid chain: Mothers against decapentaplegic homolog 6 (495 aa).

Over residues 1-15 (MFRSKRSGLVRRLWR) the composition is skewed to basic residues. 2 disordered regions span residues 1-115 (MFRS…PGWL) and 133-161 (AAGAPRDSGDPQARQSPEPEEGGGPRSRE). 2 positions are modified to dimethylated arginine; alternate: Arg-74 and Arg-81. Residues Arg-74 and Arg-81 each carry the omega-N-methylarginine; alternate modification. In terms of domain architecture, MH1 spans 149–276 (PEPEEGGGPR…FSRLCGPESP (128 aa)). Lys-174 participates in a covalent cross-link: Glycyl lysine isopeptide (Lys-Gly) (interchain with G-Cter in ubiquitin). Residues Cys-206, Cys-248, Cys-261, and His-266 each coordinate Zn(2+). Residues 332 to 495 (WCSVAYWEHR…WLEILLNNHR (164 aa)) form the MH2 domain. Ser-436 carries the post-translational modification Phosphoserine; by PRKX; in vitro.

Belongs to the dwarfin/SMAD family. In terms of assembly, interacts with NEDD4L. Interacts with WWP1. Interacts with STAMBP and PRKX. Interacts with RNF111 and AXIN1. Interacts with TGF-beta type I receptor superfamily members, including ACVR1B, BMPR1B and TGFBR1. In response to BMP2 treatment, interacts with SMAD1; this interaction may inhibit SMAD1-binding to SMAD4. Interacts with HOXC8 and HOXC9. Interacts with PELI1; this interaction interferes with PELI1 complex formation with TRAF6, IRAK1, IRAK4 and MYD88 in response to IL1B and hence negatively regulates IL1R-TLR signaling. Interacts with TSC22D1/TSC-22. Post-translationally, monoubiquitinated at Lys-174 by the E2/E3 hybrid ubiquitin-protein ligase UBE2O, leading to reduced binding affinity for the activated BMP type I receptor ACVR1/ALK2, thereby enhancing BMP7 and regulating adipocyte differentiation. Ubiquitinated by WWP1. Ubiquitinated by ARK2C, promoting proteasomal degradation, leading to enhance the BMP-Smad signaling. In terms of processing, arginine methylation by PRMT1, which is recruited by BMPR2, initiates BMP-Induced signaling and induces dissociation from the BMPR1B receptor at the cell surface leading to derepress downstream Smad1/Smad5 signaling. Phosphorylated by BMP type 1 receptor kinase and by PRKX. Ubiquitous in various organs, with higher levels in lung.

It localises to the nucleus. Its function is as follows. Transforming growth factor-beta superfamily receptors signaling occurs through the Smad family of intracellular mediators. SMAD6 is an inhibitory Smad (i-Smad) that negatively regulates signaling downstream of type I transforming growth factor-beta. Acts as a mediator of TGF-beta and BMP anti-inflammatory activities. Suppresses IL1R-TLR signaling through its direct interaction with PEL1, preventing NF-kappa-B activation, nuclear transport and NF-kappa-B-mediated expression of pro-inflammatory genes. Blocks the BMP-SMAD1 signaling pathway by competing with SMAD4 for receptor-activated SMAD1-binding. Binds to regulatory elements in target promoter regions. The sequence is that of Mothers against decapentaplegic homolog 6 (Smad6) from Mus musculus (Mouse).